The sequence spans 215 residues: Fanconi anemia core complex-associated protein 24 (215 aa).

Belongs to the multisubunit FA complex composed of FANCA, FANCB, FANCC, FANCE, FANCF, FANCG, FANCL/PHF9, FANCM and FAAP24. Interacts with FANCM.

Its subcellular location is the nucleus. In terms of biological role, plays a role in DNA repair through recruitment of the FA core complex to damaged DNA. Regulates FANCD2 monoubiquitination upon DNA damage. Induces chromosomal instability as well as hypersensitivity to DNA cross-linking agents, when repressed. Targets FANCM/FAAP24 complex to the DNA, preferentially to single strand DNA. This is Fanconi anemia core complex-associated protein 24 from Bos taurus (Bovine).